The following is a 1025-amino-acid chain: Adenylate-forming reductase 03009 (1025 aa).

The segment at 38–422 (FEFHAKSNPQ…LGRIDNQVKI (385 aa)) is adenylation (A) domain. AMP is bound by residues 332–333 (VT) and 412–415 (HLGR). A thiolation and peptide carrier (T) domain region spans residues 556-638 (SLGSTNTKIS…AILIWICVKK (83 aa)). The tract at residues 682 to 900 (FIRRTAARVY…PPTKLWVKGV (219 aa)) is thioester reductase (TR) domain. NADP(+) is bound by residues 685-688 (RTAA), 769-771 (SAL), and Y840.

The protein belongs to the adenylate-forming reductase family.

Adenylate-forming reductase, a natural product biosynthesis enzyme that resembles non-ribosomal peptide synthetases, yet serves to modify one substrate, rather than to condense two or more building blocks. The A-domain preferentially accepts L-serine, L-alanine and L-valine as substrates. The natural product of the enzyme is not yet known. The sequence is that of Adenylate-forming reductase 03009 from Coprinopsis cinerea (strain Okayama-7 / 130 / ATCC MYA-4618 / FGSC 9003) (Inky cap fungus).